Here is a 333-residue protein sequence, read N- to C-terminus: Acetoin:2,6-dichlorophenolindophenol oxidoreductase subunit alpha (333 aa).

As to quaternary structure, tetramer of 2 alpha and 2 beta subunits. Thiamine diphosphate is required as a cofactor.

Its pathway is ketone degradation; acetoin degradation. Functionally, catalyzes the 2,6-dichlorophenolindophenol-dependent cleavage of acetoin into acetate and acetaldehyde, in vitro. The alpha subunit is probably the catalytic subunit of the enzyme. This Cupriavidus necator (strain ATCC 17699 / DSM 428 / KCTC 22496 / NCIMB 10442 / H16 / Stanier 337) (Ralstonia eutropha) protein is Acetoin:2,6-dichlorophenolindophenol oxidoreductase subunit alpha (acoA).